The following is a 69-amino-acid chain: Conotoxin Lt5.10 (69 aa).

A signal peptide spans 1–19 (MLCLPVFIILLLLASPAAP). Positions 20–54 (KSLETRIQNDLIRAGLTDADLKTEKGFLSGLLNVA) are excised as a propeptide.

Belongs to the conotoxin T superfamily. Contains 2 disulfide bonds that can be either 'C1-C3, C2-C4' or 'C1-C4, C2-C3', since these disulfide connectivities have been observed for conotoxins with cysteine framework V (for examples, see AC P0DQQ7 and AC P81755). In terms of tissue distribution, expressed by the venom duct.

It localises to the secreted. The protein is Conotoxin Lt5.10 of Conus litteratus (Lettered cone).